The primary structure comprises 224 residues: Toxin coregulated pilin (224 aa).

A propeptide spans 1–25 (MQLLKQLFKKKFVKEEHDKKTGQEG) (atypical leader sequence). Methionine 26 carries the N-methylmethionine modification. A helical transmembrane segment spans residues 26–46 (MTLLEVIIVLGIMGVVSAGVV). A disulfide bridge links cysteine 145 with cysteine 211.

It localises to the fimbrium. The protein resides in the membrane. In terms of biological role, major component of the toxin co-regulated pilus (tcp) which is a type IV pilus essential for bacterial aggregation and subsequent colonization in the host small intestine. In Vibrio cholerae, this protein is Toxin coregulated pilin (tcpA).